A 258-amino-acid polypeptide reads, in one-letter code: Peroxisomal membrane protein 11B (258 aa).

Lysine 43 carries the post-translational modification N6-acetyllysine. The interaction with PEX19, PEX11G and FIS1 and peroxisome targeting stretch occupies residues valine 210–proline 258. The chain crosses the membrane as a helical span at residues glycine 232–leucine 254.

The protein belongs to the peroxin-11 family. As to quaternary structure, homodimer. Heterodimer with PEX11G. Interacts with PEX19. Interacts with FIS1.

Its subcellular location is the peroxisome membrane. Involved in peroxisomal proliferation. May regulate peroxisome division by recruiting the dynamin-related GTPase DNM1L to the peroxisomal membrane. Promotes membrane protrusion and elongation on the peroxisomal surface. In Bos taurus (Bovine), this protein is Peroxisomal membrane protein 11B (PEX11B).